We begin with the raw amino-acid sequence, 230 residues long: Urease accessory protein UreF (230 aa).

It belongs to the UreF family. As to quaternary structure, ureD, UreF and UreG form a complex that acts as a GTP-hydrolysis-dependent molecular chaperone, activating the urease apoprotein by helping to assemble the nickel containing metallocenter of UreC. The UreE protein probably delivers the nickel.

The protein resides in the cytoplasm. Its function is as follows. Required for maturation of urease via the functional incorporation of the urease nickel metallocenter. The protein is Urease accessory protein UreF of Chromohalobacter salexigens (strain ATCC BAA-138 / DSM 3043 / CIP 106854 / NCIMB 13768 / 1H11).